Consider the following 144-residue polypeptide: Large ribosomal subunit protein uL15 (144 aa).

The disordered stretch occupies residues 1–54 (MRLNTLSPAEGSKKAGKRLGRGIGSGLGKTGGRGHKGQNSRSGGGVRRGFEGGQ). Residues 21-31 (RGIGSGLGKTG) show a composition bias toward gly residues.

Belongs to the universal ribosomal protein uL15 family. In terms of assembly, part of the 50S ribosomal subunit.

Its function is as follows. Binds to the 23S rRNA. This is Large ribosomal subunit protein uL15 from Enterobacter sp. (strain 638).